We begin with the raw amino-acid sequence, 873 residues long: Alanine--tRNA ligase (873 aa).

The Zn(2+) site is built by histidine 557, histidine 561, cysteine 659, and histidine 663.

The protein belongs to the class-II aminoacyl-tRNA synthetase family. The cofactor is Zn(2+).

Its subcellular location is the cytoplasm. It catalyses the reaction tRNA(Ala) + L-alanine + ATP = L-alanyl-tRNA(Ala) + AMP + diphosphate. Catalyzes the attachment of alanine to tRNA(Ala) in a two-step reaction: alanine is first activated by ATP to form Ala-AMP and then transferred to the acceptor end of tRNA(Ala). Also edits incorrectly charged Ser-tRNA(Ala) and Gly-tRNA(Ala) via its editing domain. This chain is Alanine--tRNA ligase, found in Nitrosococcus oceani (strain ATCC 19707 / BCRC 17464 / JCM 30415 / NCIMB 11848 / C-107).